A 292-amino-acid chain; its full sequence is GTP cyclohydrolase FolE2 (292 aa).

Belongs to the GTP cyclohydrolase IV family.

The enzyme catalyses GTP + H2O = 7,8-dihydroneopterin 3'-triphosphate + formate + H(+). Its pathway is cofactor biosynthesis; 7,8-dihydroneopterin triphosphate biosynthesis; 7,8-dihydroneopterin triphosphate from GTP: step 1/1. Converts GTP to 7,8-dihydroneopterin triphosphate. This is GTP cyclohydrolase FolE2 from Staphylococcus aureus (strain Newman).